Reading from the N-terminus, the 694-residue chain is MSSPEADPIGPEVLQQWRKLTEEVREHQFRYYVRDAPIISDAEFDALLDRLTVLEEQHPELCTPDSPTQLVGGAGFMTDFVATEHLERMFSLDNAFSGDELNAWVTRIRAEIGNDAHYLCELKIDGVALSLVYRDGRLTRATTRGDGRTGEDVTLNARTIEDVPERLTVSDIYPLPEVLEVRGEVFFRVVDFQALNTSLVEEGKNPFANPRNSAAGSLRQKDPAVTAHRKLRMICHGLGHIEGFRPATQHQAYLALRDWGLPVSEHTTLVNDIAGVQGCIAYWAEHRHEVDHEIDGIVVKIDEVTLQRRLGSTSRAPRWAIAYKYLPEEAQTKLLDIRVNVGRTGRVTPFAFMTPVKVAGSTVGQATLHNPSEVKRKGVLIGDTVVIRKAGDVIPEVLGPVVDLRDGSEREFVMPTTCPECGTTLAPEKEGDADIRCPNARSCPGQLRERVFHVASRSALDIQGLGYEAGVALLAAQVITSEGDLFTLTEKALLRTELFRNKAGELSANGKRLLVNVDKAKTAPLWRVLVALSIRHVGPTAARALATEFGSVDAILAASPEQLAAVEGVGTTIAAAVTEWFTVDWHRVIVNKWRAAGVRMVDERDTSVLPTCEGLTIVVTGSLAGFSRDDAKEAIVARGGKVAGSVSKKIAYVVVGDLPGYKYDKAVELGVPILNEDGFRLLLEQGPPVQQVVD.

Residues 41–45 (DAEFD), 91–92 (SL), and Glu-121 each bind NAD(+). The N6-AMP-lysine intermediate role is filled by Lys-123. NAD(+) is bound by residues Arg-144, Glu-184, Lys-300, and Lys-324. Cys-418, Cys-421, Cys-437, and Cys-443 together coordinate Zn(2+). In terms of domain architecture, BRCT spans 607–694 (SVLPTCEGLT…QGPPVQQVVD (88 aa)).

It belongs to the NAD-dependent DNA ligase family. LigA subfamily. Mg(2+) serves as cofactor. The cofactor is Mn(2+).

It catalyses the reaction NAD(+) + (deoxyribonucleotide)n-3'-hydroxyl + 5'-phospho-(deoxyribonucleotide)m = (deoxyribonucleotide)n+m + AMP + beta-nicotinamide D-nucleotide.. DNA ligase that catalyzes the formation of phosphodiester linkages between 5'-phosphoryl and 3'-hydroxyl groups in double-stranded DNA using NAD as a coenzyme and as the energy source for the reaction. It is essential for DNA replication and repair of damaged DNA. The sequence is that of DNA ligase from Mycobacterium leprae (strain TN).